We begin with the raw amino-acid sequence, 105 residues long: uncharacterized protein (105 aa).

The ABM domain maps to 14-104 (HYITACLKII…VEWLMKSNVN (91 aa)).

This is an uncharacterized protein from Bacillus subtilis (strain 168).